The chain runs to 346 residues: DNA primase small subunit PriS (346 aa).

Catalysis depends on residues D95 and D97. C106, H108, C114, and C117 together coordinate Zn(2+). Positions 106–117 (CEHEPGTVCPIC) match the Zinc knuckle motif motif. D280 is a catalytic residue.

This sequence belongs to the eukaryotic-type primase small subunit family. Heterodimer of a small subunit (PriS) and a large subunit (PriL). Mg(2+) serves as cofactor. Mn(2+) is required as a cofactor.

Functionally, catalytic subunit of DNA primase, an RNA polymerase that catalyzes the synthesis of short RNA molecules used as primers for DNA polymerase during DNA replication. The small subunit contains the primase catalytic core and has DNA synthesis activity on its own. Binding to the large subunit stabilizes and modulates the activity, increasing the rate of DNA synthesis while decreasing the length of the DNA fragments, and conferring RNA synthesis capability. The DNA polymerase activity may enable DNA primase to also catalyze primer extension after primer synthesis. May also play a role in DNA repair. In Pyrococcus horikoshii (strain ATCC 700860 / DSM 12428 / JCM 9974 / NBRC 100139 / OT-3), this protein is DNA primase small subunit PriS.